A 631-amino-acid polypeptide reads, in one-letter code: tRNA uridine 5-carboxymethylaminomethyl modification enzyme MnmG (631 aa).

FAD contacts are provided by residues 13–18 (GGGHAG), Val-125, and Ser-180. Position 273–287 (273–287 (GPRYCPSIEDKVNRY)) interacts with NAD(+). Gln-370 lines the FAD pocket.

The protein belongs to the MnmG family. Homodimer. Heterotetramer of two MnmE and two MnmG subunits. Requires FAD as cofactor.

It is found in the cytoplasm. Its function is as follows. NAD-binding protein involved in the addition of a carboxymethylaminomethyl (cmnm) group at the wobble position (U34) of certain tRNAs, forming tRNA-cmnm(5)s(2)U34. This Alcanivorax borkumensis (strain ATCC 700651 / DSM 11573 / NCIMB 13689 / SK2) protein is tRNA uridine 5-carboxymethylaminomethyl modification enzyme MnmG.